Reading from the N-terminus, the 461-residue chain is Coronin-1A (461 aa).

Ser2 is subject to N-acetylserine. Position 2 is a phosphoserine; by PKC (Ser2). 7 WD repeats span residues 13 to 63 (HVFG…LVLP), 73 to 110 (NVPL…MVWE), 123 to 160 (PVVT…LVWD), 164 to 204 (GAAV…RVIE), 207 to 251 (KGTV…ALWD), 258 to 296 (PLSL…RYFE), and 302 to 349 (PFLH…EPIA). The segment covering 407–418 (NRGLDSARRRAT) has biased composition (basic and acidic residues). The tract at residues 407–431 (NRGLDSARRRATPEPSSTLSSDTVS) is disordered. Residue Ser412 is modified to Phosphoserine; by PKC. The residue at position 418 (Thr418) is a Phosphothreonine. Positions 420 to 430 (EPSSTLSSDTV) are enriched in polar residues. Phosphoserine is present on Ser422. Residues 425–461 (LSSDTVSRLEEDVRNLNAIVQKLQERLDRLEETVQAK) are a coiled coil.

This sequence belongs to the WD repeat coronin family. In terms of assembly, binds actin. Post-translationally, phosphorylation at Ser-412 by PKC strongly down-regulates the association with actin. In terms of processing, polyubiquitinated by RNF128 with 'Lys-48'-linked chains, leading to proteasomal degradation.

The protein resides in the cytoplasm. It is found in the cytoskeleton. It localises to the cell cortex. The protein localises to the cytoplasmic vesicle. Its subcellular location is the phagosome membrane. Its function is as follows. May be a crucial component of the cytoskeleton of highly motile cells, functioning both in the invagination of large pieces of plasma membrane, as well as in forming protrusions of the plasma membrane involved in cell locomotion. The sequence is that of Coronin-1A (Coro1a) from Rattus norvegicus (Rat).